Reading from the N-terminus, the 175-residue chain is Probable coatomer subunit zeta-A (175 aa).

The protein belongs to the adaptor complexes small subunit family. As to quaternary structure, oligomeric complex that consists of at least the alpha, beta, beta', gamma, delta, epsilon and zeta subunits.

The protein resides in the cytoplasm. Its subcellular location is the golgi apparatus membrane. It localises to the cytoplasmic vesicle. The protein localises to the COPI-coated vesicle membrane. The coatomer is a cytosolic protein complex that binds to dilysine motifs and reversibly associates with Golgi non-clathrin-coated vesicles, which further mediate biosynthetic protein transport from the ER, via the Golgi up to the trans Golgi network. Coatomer complex is required for budding from Golgi membranes, and is essential for the retrograde Golgi-to-ER transport of dilysine-tagged proteins. The zeta subunit may be involved in regulating the coat assembly and, hence, the rate of biosynthetic protein transport due to its association-dissociation properties with the coatomer complex. This chain is Probable coatomer subunit zeta-A (copZa), found in Dictyostelium discoideum (Social amoeba).